A 285-amino-acid polypeptide reads, in one-letter code: Probable endonuclease 4 (285 aa).

9 residues coordinate Zn(2+): His69, His109, Glu145, Asp179, His182, His216, Asp229, His231, and Glu261.

Belongs to the AP endonuclease 2 family. Zn(2+) is required as a cofactor.

It catalyses the reaction Endonucleolytic cleavage to 5'-phosphooligonucleotide end-products.. Endonuclease IV plays a role in DNA repair. It cleaves phosphodiester bonds at apurinic or apyrimidinic (AP) sites, generating a 3'-hydroxyl group and a 5'-terminal sugar phosphate. This chain is Probable endonuclease 4, found in Salmonella schwarzengrund (strain CVM19633).